The chain runs to 121 residues: Large ribosomal subunit protein bL12 (121 aa).

The protein belongs to the bacterial ribosomal protein bL12 family. In terms of assembly, homodimer. Part of the ribosomal stalk of the 50S ribosomal subunit. Forms a multimeric L10(L12)X complex, where L10 forms an elongated spine to which 2 to 4 L12 dimers bind in a sequential fashion. Binds GTP-bound translation factors.

Functionally, forms part of the ribosomal stalk which helps the ribosome interact with GTP-bound translation factors. Is thus essential for accurate translation. The polypeptide is Large ribosomal subunit protein bL12 (Halalkalibacterium halodurans (strain ATCC BAA-125 / DSM 18197 / FERM 7344 / JCM 9153 / C-125) (Bacillus halodurans)).